The sequence spans 428 residues: Light-independent protochlorophyllide reductase subunit N (428 aa).

The [4Fe-4S] cluster site is built by Cys-16, Cys-41, and Cys-102.

This sequence belongs to the BchN/ChlN family. In terms of assembly, protochlorophyllide reductase is composed of three subunits; ChlL, ChlN and ChlB. Forms a heterotetramer of two ChlB and two ChlN subunits. It depends on [4Fe-4S] cluster as a cofactor.

It catalyses the reaction chlorophyllide a + oxidized 2[4Fe-4S]-[ferredoxin] + 2 ADP + 2 phosphate = protochlorophyllide a + reduced 2[4Fe-4S]-[ferredoxin] + 2 ATP + 2 H2O. The protein operates within porphyrin-containing compound metabolism; chlorophyll biosynthesis (light-independent). In terms of biological role, component of the dark-operative protochlorophyllide reductase (DPOR) that uses Mg-ATP and reduced ferredoxin to reduce ring D of protochlorophyllide (Pchlide) to form chlorophyllide a (Chlide). This reaction is light-independent. The NB-protein (ChlN-ChlB) is the catalytic component of the complex. The chain is Light-independent protochlorophyllide reductase subunit N from Synechococcus sp. (strain CC9311).